Here is a 197-residue protein sequence, read N- to C-terminus: 5'-deoxynucleotidase plu3092 (197 aa).

Substrate contacts are provided by residues 16-17 (RW) and histidine 31. An HD domain is found at 28-140 (VSEHSLQVAF…IKQADSLCAY (113 aa)). A divalent metal cation-binding residues include histidine 31, histidine 66, and aspartate 67. Substrate contacts are provided by residues aspartate 67, 75–78 (DLPT), and aspartate 135. Residue aspartate 135 participates in a divalent metal cation binding.

This sequence belongs to the 5DNU family. In terms of assembly, homodimer. A divalent metal cation is required as a cofactor.

The protein resides in the cytoplasm. It carries out the reaction a 2'-deoxyribonucleoside 5'-phosphate + H2O = a 2'-deoxyribonucleoside + phosphate. Its function is as follows. Catalyzes the strictly specific dephosphorylation of 2'-deoxyribonucleoside 5'-monophosphates. The polypeptide is 5'-deoxynucleotidase plu3092 (Photorhabdus laumondii subsp. laumondii (strain DSM 15139 / CIP 105565 / TT01) (Photorhabdus luminescens subsp. laumondii)).